The chain runs to 190 residues: Large ribosomal subunit protein uL5 (190 aa).

It belongs to the universal ribosomal protein uL5 family. As to quaternary structure, part of the 50S ribosomal subunit; part of the 5S rRNA/L5/L18/L25 subcomplex. Contacts the 5S rRNA and the P site tRNA. Forms a bridge to the 30S subunit in the 70S ribosome.

Its function is as follows. This is one of the proteins that bind and probably mediate the attachment of the 5S RNA into the large ribosomal subunit, where it forms part of the central protuberance. In the 70S ribosome it contacts protein S13 of the 30S subunit (bridge B1b), connecting the 2 subunits; this bridge is implicated in subunit movement. Contacts the P site tRNA; the 5S rRNA and some of its associated proteins might help stabilize positioning of ribosome-bound tRNAs. The polypeptide is Large ribosomal subunit protein uL5 (Bifidobacterium adolescentis (strain ATCC 15703 / DSM 20083 / NCTC 11814 / E194a)).